The sequence spans 274 residues: Thiamine kinase (274 aa).

The protein belongs to the thiamine kinase family.

The enzyme catalyses thiamine + ATP = thiamine phosphate + ADP + H(+). Its pathway is cofactor biosynthesis; thiamine diphosphate biosynthesis; thiamine phosphate from thiamine: step 1/1. In terms of biological role, catalyzes the ATP-dependent phosphorylation of thiamine to thiamine phosphate. Is involved in thiamine salvage. This Salmonella heidelberg (strain SL476) protein is Thiamine kinase.